The chain runs to 738 residues: MVWLLFLSSFCFADEVVEIRISGNKRVSETTVRGLLHVEVGQDVASDELNAVFKRLTASRLFSSVELDLTAGILEVKLQENPILRNVVVKGNKLLSRAAIDKILVYKKDAIFDVHEFENSITALKSYYRDSVVEKTAISYRIVPIDENNVDVEVTVKEAKPTVIRAIEFEGNTTYSDRVLKHVIRSREKSILRLFGTAHYYSREKLEFDKDLLADFYQGKGYFDYALEGLEERENEDGVVLVFKLKEGARYSFGRVSVVSEKGEIEISDLKEKVRIREGAVFNIGAVRENALTLLSVLNERGHMFVNVVPEYHPDANGRVDLTYHVVSTKKYRIRKINISGNTRTKDTVIRREMLLSENDLYQPSKVADSRRRILNLGFFDEVYIEEHKIDGQNLILEVRVKERPTGTLNLSGGYGSDVGFFGNFSFVENNLFGTSDRLVVELQKASLGSNYSMEFQRKRIFDTFITAGASVFYKNRNEKANGLYKFSSVGGDGSVSYSLRDDLRLHLGYSLSFDKIFDVEGDAPESVKSSAGTKILSAVSYSLFLNKLDNYFVPRYGYGVRFGNKFAGIGGDVKFLRSDFKAGGFVSVFDQSAVLSLIVRAGNIFGYSGQGVDVANRFFLNEMRGFDNLGIGPRDVETDDALGGNFFILGTAEVQVPMRLPVELDLKAAFFYEVGTLTGVDVTTEKVYDSHALRSSVGAGLVWNSPFGVLRVDVAKALVEGKGDKVKTVKFGIVSPF.

The signal sequence occupies residues 1–13 (MVWLLFLSSFCFA). 5 consecutive POTRA domains span residues 14–81 (DEVV…LQEN), 82–159 (PILR…VKEA), 162–248 (TVIR…LKEG), 251–329 (YSFG…VVST), and 332–404 (YRIR…VKER).

It belongs to the BamA family. In terms of assembly, part of the Bam complex.

The protein resides in the cell outer membrane. Its function is as follows. Part of the outer membrane protein assembly complex, which is involved in assembly and insertion of beta-barrel proteins into the outer membrane. This chain is Outer membrane protein assembly factor BamA, found in Neorickettsia risticii (strain Illinois).